Here is a 492-residue protein sequence, read N- to C-terminus: 2,3-bisphosphoglycerate-independent phosphoglycerate mutase (492 aa).

2 residues coordinate Mn(2+): Asp-11 and Ser-61. Ser-61 (phosphoserine intermediate) is an active-site residue. Substrate is bound by residues His-118, 147-148, Arg-178, Arg-184, 248-251, and Lys-320; these read RD and RNDR. Residues Asp-386, His-390, Asp-427, His-428, and His-445 each contribute to the Mn(2+) site.

The protein belongs to the BPG-independent phosphoglycerate mutase family. Monomer. Mn(2+) serves as cofactor.

It catalyses the reaction (2R)-2-phosphoglycerate = (2R)-3-phosphoglycerate. The protein operates within carbohydrate degradation; glycolysis; pyruvate from D-glyceraldehyde 3-phosphate: step 3/5. Catalyzes the interconversion of 2-phosphoglycerate and 3-phosphoglycerate. In Campylobacter jejuni (strain RM1221), this protein is 2,3-bisphosphoglycerate-independent phosphoglycerate mutase.